Reading from the N-terminus, the 116-residue chain is U11-theraphotoxin-Hhn1b (116 aa).

The signal sequence occupies residues 1–21 (MNTVRVTFLLVFVLAVSLGQA). The propeptide occupies 22 to 74 (DKDENRMEMQEKTEQGKSYLDFAENLLLQKLEELEAKLLEEDSEESRNSRQKR). Basic and acidic residues predominate over residues 60-69 (LEEDSEESRN). Residues 60–83 (LEEDSEESRNSRQKRCIGEGVPCD) form a disordered region. Disulfide bonds link Cys75–Cys90, Cys82–Cys95, and Cys89–Cys110.

The protein belongs to the neurotoxin 14 (magi-1) family. 01 (HNTX-16) subfamily. In terms of tissue distribution, expressed by the venom gland.

It is found in the secreted. Functionally, probable ion channel inhibitor. This is U11-theraphotoxin-Hhn1b from Cyriopagopus hainanus (Chinese bird spider).